Here is a 120-residue protein sequence, read N- to C-terminus: NAD(P)H-quinone oxidoreductase subunit 3 (120 aa).

A run of 3 helical transmembrane segments spans residues 10-30, 64-84, and 89-109; these read LLVF…ASAL, MFAL…PWAV, and LGLL…VGLV.

This sequence belongs to the complex I subunit 3 family. NDH-1 can be composed of about 15 different subunits; different subcomplexes with different compositions have been identified which probably have different functions.

It localises to the cellular thylakoid membrane. The catalysed reaction is a plastoquinone + NADH + (n+1) H(+)(in) = a plastoquinol + NAD(+) + n H(+)(out). It carries out the reaction a plastoquinone + NADPH + (n+1) H(+)(in) = a plastoquinol + NADP(+) + n H(+)(out). In terms of biological role, NDH-1 shuttles electrons from an unknown electron donor, via FMN and iron-sulfur (Fe-S) centers, to quinones in the respiratory and/or the photosynthetic chain. The immediate electron acceptor for the enzyme in this species is believed to be plastoquinone. Couples the redox reaction to proton translocation, and thus conserves the redox energy in a proton gradient. Cyanobacterial NDH-1 also plays a role in inorganic carbon-concentration. This Synechococcus sp. (strain JA-3-3Ab) (Cyanobacteria bacterium Yellowstone A-Prime) protein is NAD(P)H-quinone oxidoreductase subunit 3.